The following is a 283-amino-acid chain: Nucleotide-binding protein THEYE_A0235 (283 aa).

12–19 (GLSGGGKT) provides a ligand contact to ATP. 62 to 65 (DIRV) is a GTP binding site.

This sequence belongs to the RapZ-like family.

In terms of biological role, displays ATPase and GTPase activities. The protein is Nucleotide-binding protein THEYE_A0235 of Thermodesulfovibrio yellowstonii (strain ATCC 51303 / DSM 11347 / YP87).